The primary structure comprises 823 residues: Putative ankyrin repeat domain-containing protein 20A3 (823 aa).

ANK repeat units follow at residues 66-95 (QHRTALHLACASGHVQVVTLLVNRKCQIDV), 99-128 (ENRTPLIQAVHCQEEACAVILLEHGANPNL), 132-161 (YGNTALHYAVYSESTSLAEKLLSHGAHIEA), 165-194 (DNNTPLLFAIICKKEKMVEFLLKRKASSHA), and 198-227 (LRRSALMLAVYYDSPGIVNILLKQNIDVFA). Disordered stretches follow at residues 301-343 (VPEK…EVED) and 355-402 (VQTL…LSEN). Residues 372-384 (QERHERSEKKQPQ) show a composition bias toward basic and acidic residues. Coiled-coil stretches lie at residues 431-480 (KKLK…KQLE), 571-724 (AFRY…NNST), and 776-805 (LVLEEKSKKLMNECDHLKESLFQYEREKTE).

The sequence is that of Putative ankyrin repeat domain-containing protein 20A3 from Homo sapiens (Human).